Reading from the N-terminus, the 91-residue chain is Large ribosomal subunit protein bL27 (91 aa).

The disordered stretch occupies residues 1–24 (MAHKKGVGSSRNGRDSNPKMRGVK).

This sequence belongs to the bacterial ribosomal protein bL27 family.

The sequence is that of Large ribosomal subunit protein bL27 from Chloroflexus aggregans (strain MD-66 / DSM 9485).